We begin with the raw amino-acid sequence, 566 residues long: Oxygen-dependent choline dehydrogenase (566 aa).

7-36 serves as a coordination point for FAD; the sequence is DYIICGAGSAGNVLATRLTEDPDVTVLLLE. The tract at residues 180–202 is disordered; it reads NGYQQEGFGPMDRTVTPKGRRAS. The active-site Proton acceptor is the H474.

The protein belongs to the GMC oxidoreductase family. FAD is required as a cofactor.

It carries out the reaction choline + A = betaine aldehyde + AH2. The catalysed reaction is betaine aldehyde + NAD(+) + H2O = glycine betaine + NADH + 2 H(+). It participates in amine and polyamine biosynthesis; betaine biosynthesis via choline pathway; betaine aldehyde from choline (cytochrome c reductase route): step 1/1. Functionally, involved in the biosynthesis of the osmoprotectant glycine betaine. Catalyzes the oxidation of choline to betaine aldehyde and betaine aldehyde to glycine betaine at the same rate. This is Oxygen-dependent choline dehydrogenase from Burkholderia cenocepacia (strain HI2424).